The following is a 498-amino-acid chain: Cytochrome P450 71B24 (498 aa).

The helical transmembrane segment at 1-21 threads the bilayer; that stretch reads MSILLYFIALLSLIIIKKIKD. Heme is bound at residue Cys-442.

The protein belongs to the cytochrome P450 family. It depends on heme as a cofactor.

It localises to the membrane. This chain is Cytochrome P450 71B24 (CYP71B24), found in Arabidopsis thaliana (Mouse-ear cress).